The sequence spans 114 residues: MSTMKFCRECNNILYPKEDKEQSILLYACRNCDHQEAADNNCVYRNEVHHSVSEQTQILSDVASDPTLPRTKAVRCAKCQHGEAVFFQATARGEEGMTLFFVCCNPNCSHRWRE.

Zn(2+) contacts are provided by Cys-7, Cys-10, Cys-29, Cys-32, Cys-76, Cys-79, Cys-103, and Cys-108. The TFIIS-type zinc finger occupies Lys-72–Arg-113.

It belongs to the archaeal RpoM/eukaryotic RPA12/RPB9/RPC11 RNA polymerase family. In terms of assembly, component of the RNA polymerase II, IV and V complexes. Interacts with NRPD1.

The protein localises to the nucleus. The protein resides in the nucleolus. DNA-dependent RNA polymerase catalyzes the transcription of DNA into RNA using the four ribonucleoside triphosphates as substrates. Component of RNA polymerase II which synthesizes mRNA precursors and many functional non-coding RNAs. Pol II is the central component of the basal RNA polymerase II transcription machinery. It is composed of mobile elements that move relative to each other. Component of RNA polymerases IV and V which mediate short-interfering RNAs (siRNA) accumulation and subsequent RNA-directed DNA methylation-dependent (RdDM) transcriptional gene silencing (TGS) of endogenous repeated sequences, including transposable elements. Required for RNA silencing. The sequence is that of DNA-directed RNA polymerases II, IV and V subunit 9B (NRPB9B) from Arabidopsis thaliana (Mouse-ear cress).